The sequence spans 414 residues: Alanine--glyoxylate aminotransferase (414 aa).

The N-terminal 23 residues, 1–23, are a transit peptide targeting the mitochondrion; sequence MFRMLAKASVTLGSRAAGWVRTM. At Lys231 the chain carries N6-(pyridoxal phosphate)lysine. Lys247 bears the N6-acetyllysine; alternate mark. Lys247 carries the post-translational modification N6-succinyllysine; alternate. N6-acetyllysine is present on Lys256. Lys330 bears the N6-acetyllysine; alternate mark. An N6-succinyllysine; alternate modification is found at Lys330. At Lys334 the chain carries N6-acetyllysine. Arg382 lines the substrate pocket. The Microbody targeting signal motif lies at 412 to 414; sequence NKL.

Belongs to the class-V pyridoxal-phosphate-dependent aminotransferase family. As to quaternary structure, homodimer. Pyridoxal 5'-phosphate is required as a cofactor.

It localises to the peroxisome. The protein localises to the mitochondrion matrix. It carries out the reaction L-serine + pyruvate = 3-hydroxypyruvate + L-alanine. The catalysed reaction is glyoxylate + L-alanine = glycine + pyruvate. In terms of biological role, catalyzes the transamination of glyoxylate to glycine and contributes to the glyoxylate detoxification. Its function is as follows. Catalyzes the transamination between L-serine and pyruvate and weakly contributes to gluconeogenesis from the L-serine metabolism. The polypeptide is Alanine--glyoxylate aminotransferase (Mus musculus (Mouse)).